The following is a 712-amino-acid chain: Ribosomal RNA large subunit methyltransferase K/L (712 aa).

The 112-residue stretch at 42 to 153 (QALRIVMWSR…KGRASLSIDL (112 aa)) folds into the THUMP domain.

This sequence belongs to the methyltransferase superfamily. RlmKL family.

Its subcellular location is the cytoplasm. It catalyses the reaction guanosine(2445) in 23S rRNA + S-adenosyl-L-methionine = N(2)-methylguanosine(2445) in 23S rRNA + S-adenosyl-L-homocysteine + H(+). The catalysed reaction is guanosine(2069) in 23S rRNA + S-adenosyl-L-methionine = N(2)-methylguanosine(2069) in 23S rRNA + S-adenosyl-L-homocysteine + H(+). Its function is as follows. Specifically methylates the guanine in position 2445 (m2G2445) and the guanine in position 2069 (m7G2069) of 23S rRNA. The protein is Ribosomal RNA large subunit methyltransferase K/L of Stenotrophomonas maltophilia (strain K279a).